The primary structure comprises 412 residues: Serine hydroxymethyltransferase (412 aa).

Residues Leu-117 and 121–123 (GHL) contribute to the (6S)-5,6,7,8-tetrahydrofolate site. Lys-226 carries the N6-(pyridoxal phosphate)lysine modification. Residue 349–351 (SPF) coordinates (6S)-5,6,7,8-tetrahydrofolate.

Belongs to the SHMT family. In terms of assembly, homodimer. Pyridoxal 5'-phosphate is required as a cofactor.

It is found in the cytoplasm. It carries out the reaction (6R)-5,10-methylene-5,6,7,8-tetrahydrofolate + glycine + H2O = (6S)-5,6,7,8-tetrahydrofolate + L-serine. It participates in one-carbon metabolism; tetrahydrofolate interconversion. Its pathway is amino-acid biosynthesis; glycine biosynthesis; glycine from L-serine: step 1/1. Its function is as follows. Catalyzes the reversible interconversion of serine and glycine with tetrahydrofolate (THF) serving as the one-carbon carrier. This reaction serves as the major source of one-carbon groups required for the biosynthesis of purines, thymidylate, methionine, and other important biomolecules. Also exhibits THF-independent aldolase activity toward beta-hydroxyamino acids, producing glycine and aldehydes, via a retro-aldol mechanism. The protein is Serine hydroxymethyltransferase of Geobacillus kaustophilus (strain HTA426).